We begin with the raw amino-acid sequence, 206 residues long: Two-component response regulator ARR7 (206 aa).

In terms of domain architecture, Response regulatory spans 25–152; sequence HVLAVDDSIV…DVKRIKQLIM (128 aa). Position 85 is a 4-aspartylphosphate (D85). Positions 165-206 are disordered; the sequence is SNKRKLQEDSDTSSSSHDDTSIKDSSCSKRMKSESENLFSLL.

The protein belongs to the ARR family. Type-A subfamily. In terms of processing, two-component system major event consists of a His-to-Asp phosphorelay between a sensor histidine kinase (HK) and a response regulator (RR). In plants, the His-to-Asp phosphorelay involves an additional intermediate named Histidine-containing phosphotransfer protein (HPt). This multistep phosphorelay consists of a His-Asp-His-Asp sequential transfer of a phosphate group between first a His and an Asp of the HK protein, followed by the transfer to a conserved His of the HPt protein and finally the transfer to an Asp in the receiver domain of the RR protein. Predominantly expressed in roots and young flowers.

It is found in the nucleus. Functionally, functions as a response regulator involved in His-to-Asp phosphorelay signal transduction system. Phosphorylation of the Asp residue in the receiver domain activates the ability of the protein to promote the transcription of target genes. Type-A response regulators seem to act as negative regulators of the cytokinin signaling. This chain is Two-component response regulator ARR7 (ARR7), found in Arabidopsis thaliana (Mouse-ear cress).